The chain runs to 553 residues: Cytochrome P450 86A22 (553 aa).

The helical transmembrane segment at 8–24 (MIVAIVAAYLLWFKSIT) threads the bilayer. Residue Cys459 participates in heme binding.

The protein belongs to the cytochrome P450 family. Heme serves as cofactor. As to expression, mostly expressed in the developing stigma of floral buds. Weakly detected in leaves, stems and flowers.

It is found in the membrane. The enzyme catalyses (9Z)-octadecenoyl-CoA + reduced [NADPH--hemoprotein reductase] + O2 = (9Z)-18-hydroxyoctadecenoyl-CoA + oxidized [NADPH--hemoprotein reductase] + H2O + H(+). It catalyses the reaction (9Z,12Z)-octadecadienoyl-CoA + reduced [NADPH--hemoprotein reductase] + O2 = (9Z,12Z)-18-hydroxyoctadecadienoyl-CoA + oxidized [NADPH--hemoprotein reductase] + H2O + H(+). Functionally, fatty acyl-CoA omega-hydroxylase essential for the production of omega-hydroxy fatty acids and the biosynthesis of triacylglycerol-/diacylglycerol-based estolide polyesters in the stigma. Substrate preference is 16:0-CoA &gt; 18:1-CoA &gt; 18:0-CoA. This is Cytochrome P450 86A22 from Petunia hybrida (Petunia).